The primary structure comprises 207 residues: MPPRVEGLYAVTPDGLDDARLFALAAAALAGGARALQYRDKSGDAGRRLRQAAELQRLCRAHGALFIVNDDVELAERIGADGVHLGRDDGDIAAARRRLGADAVIGASCYDRIELARAALAAGASYVAFGAVFPSRTKPHAAAAPLSLFADAAALGANAVAIGGIAAGNAGRAVEAGADAIAVIGGLFDADDTAAAARALAGWFGAR.

Residues 37 to 41 (QYRDK) and Asn69 contribute to the 4-amino-2-methyl-5-(diphosphooxymethyl)pyrimidine site. Mg(2+) is bound by residues Asp70 and Asp89. Residue Ser108 participates in 4-amino-2-methyl-5-(diphosphooxymethyl)pyrimidine binding. A 2-[(2R,5Z)-2-carboxy-4-methylthiazol-5(2H)-ylidene]ethyl phosphate-binding site is contributed by 135 to 137 (SRT). Lys138 contacts 4-amino-2-methyl-5-(diphosphooxymethyl)pyrimidine. Gly164 is a binding site for 2-[(2R,5Z)-2-carboxy-4-methylthiazol-5(2H)-ylidene]ethyl phosphate.

Belongs to the thiamine-phosphate synthase family. It depends on Mg(2+) as a cofactor.

It catalyses the reaction 2-[(2R,5Z)-2-carboxy-4-methylthiazol-5(2H)-ylidene]ethyl phosphate + 4-amino-2-methyl-5-(diphosphooxymethyl)pyrimidine + 2 H(+) = thiamine phosphate + CO2 + diphosphate. The catalysed reaction is 2-(2-carboxy-4-methylthiazol-5-yl)ethyl phosphate + 4-amino-2-methyl-5-(diphosphooxymethyl)pyrimidine + 2 H(+) = thiamine phosphate + CO2 + diphosphate. It carries out the reaction 4-methyl-5-(2-phosphooxyethyl)-thiazole + 4-amino-2-methyl-5-(diphosphooxymethyl)pyrimidine + H(+) = thiamine phosphate + diphosphate. It functions in the pathway cofactor biosynthesis; thiamine diphosphate biosynthesis; thiamine phosphate from 4-amino-2-methyl-5-diphosphomethylpyrimidine and 4-methyl-5-(2-phosphoethyl)-thiazole: step 1/1. Functionally, condenses 4-methyl-5-(beta-hydroxyethyl)thiazole monophosphate (THZ-P) and 2-methyl-4-amino-5-hydroxymethyl pyrimidine pyrophosphate (HMP-PP) to form thiamine monophosphate (TMP). The chain is Thiamine-phosphate synthase from Chromobacterium violaceum (strain ATCC 12472 / DSM 30191 / JCM 1249 / CCUG 213 / NBRC 12614 / NCIMB 9131 / NCTC 9757 / MK).